Reading from the N-terminus, the 1312-residue chain is Cyclic GMP-binding protein D (1312 aa).

One can recognise an N-terminal Ras-GEF domain in the interval 26–155 (GFSAIKSCSL…EFFKAKKMAR (130 aa)). Low complexity-rich tracts occupy residues 206 to 236 (NTMNGINGTSNNNVNSNNNNNNGTTNISSPN) and 275 to 296 (NGTSPQSSPSSTLSSTNSLFNQ). Disordered regions lie at residues 206 to 244 (NTMNGINGTSNNNVNSNNNNNNGTTNISSPNFDPSRSSM) and 260 to 326 (NFNN…NNVN). The segment covering 297–310 (QPSLSMLNDDGSVQ) has biased composition (polar residues). Residues 311-326 (NNNNNNNNNNNNNNVN) show a composition bias toward low complexity. One can recognise a Ras-GEF domain in the interval 353–582 (LPEAIAKELT…FRLSKIREET (230 aa)). The tract at residues 586 to 658 (QSLKESNGIG…NCGNGSGISS (73 aa)) is disordered. A compositionally biased stretch (low complexity) spans 591–612 (SNGIGNSNSTSGGSSSSLVNKD). Residues 613–625 (GSGGGGGSGGGGS) show a composition bias toward gly residues. Residues 630-644 (GDGKGDGKDNRDGRG) show a composition bias toward basic and acidic residues. The span at 646-657 (GNSNCGNGSGIS) shows a compositional bias: low complexity. Residue 698–857 (VSSTLSEREW…ATFYKFIGVI (160 aa)) coordinates a nucleoside 3',5'-cyclic phosphate. One can recognise a GRAM domain in the interval 940–1006 (SSFRTKFGLS…DKILTVDKNI (67 aa)). Low complexity predominate over residues 1059-1087 (QQQQPSQQPSQQQSQSSQLQQSVSASSTT). Disordered stretches follow at residues 1059-1108 (QQQQ…IKDL) and 1167-1210 (NNIN…NSSI). A nucleoside 3',5'-cyclic phosphate is bound by residues 1105 to 1218 (IKDL…SNTS) and 1182 to 1303 (NNNN…LACV).

Promotes the exchange of Ras-bound GDP by GTP. Induces the formation of substrate-attached pseudopodia, that leads to increased adhesion and thereby negatively influencing cell speed and polarity. This is Cyclic GMP-binding protein D (gbpD) from Dictyostelium discoideum (Social amoeba).